A 474-amino-acid chain; its full sequence is 3-isopropylmalate dehydratase large subunit (474 aa).

[4Fe-4S] cluster contacts are provided by C355, C415, and C418.

It belongs to the aconitase/IPM isomerase family. LeuC type 1 subfamily. Heterodimer of LeuC and LeuD. [4Fe-4S] cluster is required as a cofactor.

The catalysed reaction is (2R,3S)-3-isopropylmalate = (2S)-2-isopropylmalate. It functions in the pathway amino-acid biosynthesis; L-leucine biosynthesis; L-leucine from 3-methyl-2-oxobutanoate: step 2/4. Catalyzes the isomerization between 2-isopropylmalate and 3-isopropylmalate, via the formation of 2-isopropylmaleate. The chain is 3-isopropylmalate dehydratase large subunit from Shewanella sp. (strain ANA-3).